A 327-amino-acid polypeptide reads, in one-letter code: Glycerol-3-phosphate dehydrogenase [NAD(P)+] (327 aa).

NADPH is bound by residues S10, F11, R31, and K108. Sn-glycerol 3-phosphate is bound by residues K108, G136, and S138. NADPH is bound at residue A140. Sn-glycerol 3-phosphate is bound by residues K191, D246, S256, R257, and N258. K191 acts as the Proton acceptor in catalysis. R257 contributes to the NADPH binding site. Residues L281 and E283 each coordinate NADPH.

The protein belongs to the NAD-dependent glycerol-3-phosphate dehydrogenase family.

The protein resides in the cytoplasm. The enzyme catalyses sn-glycerol 3-phosphate + NAD(+) = dihydroxyacetone phosphate + NADH + H(+). The catalysed reaction is sn-glycerol 3-phosphate + NADP(+) = dihydroxyacetone phosphate + NADPH + H(+). The protein operates within membrane lipid metabolism; glycerophospholipid metabolism. Functionally, catalyzes the reduction of the glycolytic intermediate dihydroxyacetone phosphate (DHAP) to sn-glycerol 3-phosphate (G3P), the key precursor for phospholipid synthesis. The chain is Glycerol-3-phosphate dehydrogenase [NAD(P)+] from Ehrlichia ruminantium (strain Welgevonden).